Consider the following 201-residue polypeptide: FMN-dependent NADH:quinone oxidoreductase (201 aa).

FMN-binding positions include Ser10, Ser16–Ser18, Met96–Phe99, and Ser140–Gly143.

It belongs to the azoreductase type 1 family. In terms of assembly, homodimer. FMN is required as a cofactor.

It catalyses the reaction 2 a quinone + NADH + H(+) = 2 a 1,4-benzosemiquinone + NAD(+). The catalysed reaction is N,N-dimethyl-1,4-phenylenediamine + anthranilate + 2 NAD(+) = 2-(4-dimethylaminophenyl)diazenylbenzoate + 2 NADH + 2 H(+). Quinone reductase that provides resistance to thiol-specific stress caused by electrophilic quinones. Its function is as follows. Also exhibits azoreductase activity. Catalyzes the reductive cleavage of the azo bond in aromatic azo compounds to the corresponding amines. The chain is FMN-dependent NADH:quinone oxidoreductase from Shigella flexneri serotype 5b (strain 8401).